Reading from the N-terminus, the 453-residue chain is O-methyltransferase bik3 (453 aa).

Positions 1–25 are disordered; that stretch reads MVSNGISNGTNGTNGTTTNGTNGVN. The span at 8–25 shows a compositional bias: low complexity; it reads NGTNGTNGTTTNGTNGVN. S-adenosyl-L-methionine is bound at residue Asp305. Residue His355 is the Proton acceptor of the active site.

This sequence belongs to the class I-like SAM-binding methyltransferase superfamily. Cation-independent O-methyltransferase family. COMT subfamily.

It functions in the pathway secondary metabolite biosynthesis. In terms of biological role, O-methyltransferase; part of the gene cluster that mediates the biosynthesis of bikaverin, a red pigment also considered as a mycotoxin. The first stage is catalyzed by the polyketide synthase bik1, which catalyzes the formation of the intermediate SMA76a also knowm as pre-bikaverin. FAD-dependent monooxygenase bik2 might then be responsible for the oxidation of pre-bikaverin to oxo-pre-bikaverin which is in turn methylated by the O-methyltransferase bik3 to me-oxo-pre-bikaverin. A further cycle of oxydation and methylation by bik2 and bik3 leads to the final product of bikaverin, via a nor-bikaverin intermediate. The protein is O-methyltransferase bik3 of Gibberella fujikuroi (strain CBS 195.34 / IMI 58289 / NRRL A-6831) (Bakanae and foot rot disease fungus).